The sequence spans 264 residues: Putative [LysW]-aminoadipate/[LysW]-glutamate kinase (264 aa).

Substrate contacts are provided by residues 34–35 (GG), R61, and N169.

This sequence belongs to the acetylglutamate kinase family. LysZ subfamily.

The protein resides in the cytoplasm. It carries out the reaction [amino-group carrier protein]-C-terminal-N-(1,4-dicarboxybutan-1-yl)-L-glutamine + ATP = [amino-group carrier protein]-C-terminal-N-(1-carboxy-5-phosphooxy-5-oxopentan-1-yl)-L-glutamine + ADP. It catalyses the reaction [amino-group carrier protein]-C-terminal-gamma-(L-glutamyl)-L-glutamate + ATP = [amino-group carrier protein]-C-terminal-gamma-(5-phospho-L-glutamyl)-L-glutamate + ADP. It participates in amino-acid biosynthesis; L-lysine biosynthesis via AAA pathway; L-lysine from L-alpha-aminoadipate (Thermus route): step 2/5. The protein operates within amino-acid biosynthesis; L-arginine biosynthesis. Its function is as follows. Involved in both the arginine and lysine biosynthetic pathways. Phosphorylates the LysW-bound precursors glutamate (for arginine biosynthesis), respectively alpha-aminoadipate (for lysine biosynthesis). This is Putative [LysW]-aminoadipate/[LysW]-glutamate kinase from Ignicoccus hospitalis (strain KIN4/I / DSM 18386 / JCM 14125).